Reading from the N-terminus, the 452-residue chain is Tylactone mycaminosyltransferase (452 aa).

The segment covering 1–16 has biased composition (basic and acidic residues); that stretch reads MRRALDDRRRGPHGPE. The tract at residues 1-20 is disordered; that stretch reads MRRALDDRRRGPHGPEGKPP.

It belongs to the glycosyltransferase 28 family.

It carries out the reaction tylactone + dTDP-alpha-D-mycaminose = 5-O-beta-D-mycaminosyltylactone + dTDP + H(+). Its pathway is antibiotic biosynthesis; tylosin biosynthesis. The activity of TylM2 is substantially increased by the addition of the accessory protein TylM3. In terms of biological role, involved in the biosynthesis of the macrolide antibiotic tylosin derived from the polyketide lactone tylactone. Catalyzes the transfer of alpha-D-mycaminosyl from dTDP-alpha-D-mycaminose to the 5-hydroxyl group of tylactone to yield 5-O-mycaminosytylactone. It can also accept 16-membered tylactone and 12-membered ring macrolide. The chain is Tylactone mycaminosyltransferase from Streptomyces fradiae (Streptomyces roseoflavus).